The primary structure comprises 310 residues: HPr kinase/phosphorylase (310 aa).

Active-site residues include His138 and Lys159. 153-160 serves as a coordination point for ATP; sequence GKSGVGKS. Ser160 provides a ligand contact to Mg(2+). Catalysis depends on Asp177, which acts as the Proton acceptor; for phosphorylation activity. Proton donor; for dephosphorylation activity. Residues 201-210 are important for the catalytic mechanism of both phosphorylation and dephosphorylation; it reads LEIRGLGIIN. Residue Glu202 coordinates Mg(2+). Arg243 is a catalytic residue. The interval 264–269 is important for the catalytic mechanism of dephosphorylation; sequence PVRPGR.

It belongs to the HPrK/P family. In terms of assembly, homohexamer. Requires Mg(2+) as cofactor.

It catalyses the reaction [HPr protein]-L-serine + ATP = [HPr protein]-O-phospho-L-serine + ADP + H(+). The catalysed reaction is [HPr protein]-O-phospho-L-serine + phosphate + H(+) = [HPr protein]-L-serine + diphosphate. Catalyzes the ATP- as well as the pyrophosphate-dependent phosphorylation of a specific serine residue in HPr, a phosphocarrier protein of the phosphoenolpyruvate-dependent sugar phosphotransferase system (PTS). HprK/P also catalyzes the pyrophosphate-producing, inorganic phosphate-dependent dephosphorylation (phosphorolysis) of seryl-phosphorylated HPr (P-Ser-HPr). The two antagonistic activities of HprK/P are regulated by several intracellular metabolites, which change their concentration in response to the absence or presence of rapidly metabolisable carbon sources (glucose, fructose, etc.) in the growth medium. Also phosphorylates/dephosphorylates the HPr-like catabolite repression protein crh on a specific serine residue. Therefore, by controlling the phosphorylation state of HPr and crh, HPrK/P is a sensor enzyme that plays a major role in the regulation of carbon metabolism and sugar transport: it mediates carbon catabolite repression (CCR), and regulates PTS-catalyzed carbohydrate uptake and inducer exclusion. In Bacillus licheniformis (strain ATCC 14580 / DSM 13 / JCM 2505 / CCUG 7422 / NBRC 12200 / NCIMB 9375 / NCTC 10341 / NRRL NRS-1264 / Gibson 46), this protein is HPr kinase/phosphorylase.